Here is a 402-residue protein sequence, read N- to C-terminus: Type II NADH:quinone oxidoreductase (402 aa).

FAD contacts are provided by residues 12-16 (GAGYA), 39-40 (NK), and Val83. Glu172 is an active-site residue. FAD is bound by residues Asp302, 319–320 (AQ), and Lys379.

It belongs to the NADH dehydrogenase family. Homodimer in solution. Forms homotetramers; dimer of dimers. FAD serves as cofactor.

The protein resides in the cell membrane. It carries out the reaction a quinone + NADH + H(+) = a quinol + NAD(+). It catalyses the reaction a menaquinone + NADH + H(+) = a menaquinol + NAD(+). The enzyme catalyses a ubiquinone + NADH + H(+) = a ubiquinol + NAD(+). Its activity is regulated as follows. Inhibited by HQNO, a quinone derivative. In terms of biological role, alternative, nonproton pumping NADH:quinone oxidoreductase that delivers electrons to the respiratory chain by oxidation of NADH and reduction of quinones, and contributes to the regeneration of NAD(+). Can use DMN, a menaquinone analog, 2,3-dimethoxy-5,6-dimethyl-benzoquinone (DDB), an ubiquinone analog, or 2,3,5,6-tetramethyl-1,4-benzoquinone (Duroquinone, DQ) a plastoquinone analog as electron acceptors. This is Type II NADH:quinone oxidoreductase from Staphylococcus aureus (strain NCTC 8325 / PS 47).